Here is a 584-residue protein sequence, read N- to C-terminus: Vesicular glutamate transporter 2.1 (584 aa).

The Cytoplasmic portion of the chain corresponds to 1-70 (METPREPAGF…CTCFGLPRRY (70 aa)). A helical membrane pass occupies residues 71 to 91 (IIAIMSGLGFCISFGIRCNLG). Over 92–124 (VAIVSMVNNSTIHLNGKIIIKEKAKFNWDPETV) the chain is Vesicular. Residues Asn-99 and Asn-100 are each glycosylated (N-linked (GlcNAc...) asparagine). A helical transmembrane segment spans residues 125-145 (GLIHGSFFWGYIVTQIPGGYI). Topologically, residues 146–148 (SSR) are cytoplasmic. The helical transmembrane segment at 149-169 (LAANRVFGAAILLTSTLNMFI) threads the bilayer. Residues 170-177 (PSAARGHY) lie on the Vesicular side of the membrane. A helical transmembrane segment spans residues 178-198 (GCVIFVRILQGLVEGVTYPAC). The Cytoplasmic portion of the chain corresponds to 199–216 (HGIWSKWAPPLERSRLAT). Residues 217–237 (TSFCGSYAGAVIAMPLAGILV) form a helical membrane-spanning segment. At 238–244 (QYTGWSS) the chain is on the vesicular side. The chain crosses the membrane as a helical span at residues 245-265 (VFYVYGCFGIFWYMFWILVSY). At 266 to 310 (ESPAEHPTITAEERCYIEESIGESAKLLGPADKFKTPWRKFFTSM) the chain is on the cytoplasmic side. A helical membrane pass occupies residues 311–331 (PVYAIIVANFCRSWTFYLLLI). Residues 332–349 (SQPAYFEEVFGFEISKVG) are Vesicular-facing. A helical membrane pass occupies residues 350–370 (MLSALPHLVMTIIVPIGGQLA). Residues 371 to 386 (DHLRSKNILSTTTVRK) lie on the Cytoplasmic side of the membrane. Residues 387 to 407 (IMNCGGFGMEATLLLIVGYSH) traverse the membrane as a helical segment. Residues 408-409 (SK) are Vesicular-facing. A helical transmembrane segment spans residues 410–430 (GVAISFLVLAVGFSGFAISGF). The Cytoplasmic portion of the chain corresponds to 431–445 (NVNHLDIAPRYASIL). Residues 446–466 (MGISNGVGTLSGMVCPLIVGA) traverse the membrane as a helical segment. Residues 467 to 477 (MTKHKTREEWQ) are Vesicular-facing. The helical transmembrane segment at 478 to 498 (YVFLIASLVHYGGVIFYGIFA) threads the bilayer. Residues 499-584 (SGEKQPWADP…YGYRQGGNYS (86 aa)) lie on the Cytoplasmic side of the membrane.

This sequence belongs to the major facilitator superfamily. Sodium/anion cotransporter family. VGLUT subfamily. In terms of tissue distribution, expressed in spinal cord and retinal ganglion cells.

The protein localises to the cytoplasmic vesicle. It is found in the secretory vesicle. It localises to the synaptic vesicle membrane. The protein resides in the membrane. Its subcellular location is the synapse. The protein localises to the synaptosome. It is found in the cell membrane. The enzyme catalyses L-glutamate(out) = L-glutamate(in). It carries out the reaction 3 Na(+)(out) + phosphate(out) = 3 Na(+)(in) + phosphate(in). It catalyses the reaction phosphate(in) = phosphate(out). The catalysed reaction is K(+)(in) + H(+)(out) = K(+)(out) + H(+)(in). The enzyme catalyses chloride(in) = chloride(out). Chloride channel activity is allosterically activated by lumenal H(+) and Cl(-) leading to synaptic vesicles acidification. The L-glutamate transport activity is allosterically activated by lumenal H(+) and Cl(-). The allosteric requirement for H(+) efficiently prevents non-vesicular efflux across the plasma membrane. The L-glutamate uniporter activity exhibits a biphasic dependence on chloride concentration. Functionally, multifunctional transporter that transports L-glutamate as well as multiple ions such as chloride, proton, potassium, sodium and phosphate. At the synaptic vesicle membrane, mainly functions as a uniporter which transports preferentially L-glutamate but also, phosphate from the cytoplasm into synaptic vesicles at presynaptic nerve terminals of excitatory neural cells. The L-glutamate or phosphate uniporter activity is electrogenic and is driven by the proton electrochemical gradient, mainly by the electrical gradient established by the vacuolar H(+)-ATPase across the synaptic vesicle membrane. In addition, functions as a chloride channel that allows a chloride permeation through the synaptic vesicle membrane therefore affects the proton electrochemical gradient and promotes synaptic vesicles acidification. Moreover, functions as a vesicular K(+)/H(+) antiport allowing to maintain the electrical gradient and to decrease chemical gradient and therefore sustain vesicular L-glutamate uptake. The vesicular H(+)/H(+) antiport activity is electroneutral. At the plasma membrane, following exocytosis, functions as a symporter of Na(+) and phosphate from the extracellular space to the cytoplasm allowing synaptic phosphate homeostasis regulation. The symporter activity is driven by an inside negative membrane potential and is electrogenic. Also involved in the regulation of retinal hyaloid vessel regression during postnatal development. May also play a role in the endocrine L-glutamatergic system of other tissues such as pineal gland and pancreas. Required for glutamate release by retinotectal synapses and visual acuity. In Danio rerio (Zebrafish), this protein is Vesicular glutamate transporter 2.1 (slc17a6b).